The sequence spans 60 residues: U-scutigerotoxin(02)-Tl4a (60 aa).

Belongs to the scutigerotoxin-02 family. Post-translationally, contains 3 disulfide bonds. As to expression, expressed by the venom gland.

Its subcellular location is the secreted. The polypeptide is U-scutigerotoxin(02)-Tl4a (Thereuopoda longicornis (Long-legged centipede)).